The following is a 380-amino-acid chain: MAPNPRKSHPLLKMINNSLIDLPTPSNISAWWNFGSLLALCLMTQILTGLLLAMHYTADTTLAFSSVAHTCRDVQYGWLIRNMHANGASFFFICIYLHIGRGFYYGSYLHKETWNTGVLLLLTLMATAFVGYVLPWGQMSFWGATVITNMFSAIPYIGQTIVEWAWGGFSVDNPTLTRFFALHFLLPFMIAGLTLIHLTFLHESGSNNPLGIVSNCDKIPFHPYYSLKDILGLALLLLPLTTMALFSPNLLGDPENFTPANPLVTPPHIKPEWYFLFAYAILRSIPNKLGGVLALAASVLVLFLSPLLHKSKQRTMAFRPLSQLLFWALVANLLILTWIGSQPVEHPFIIIGQLASTTYFIILLILFPITSALENKMLNF.

A run of 4 helical transmembrane segments spans residues 34–54, 78–99, 114–134, and 179–199; these read FGSLLALCLMTQILTGLLLAM, WLIRNMHANGASFFFICIYLHI, WNTGVLLLLTLMATAFVGYVL, and FFALHFLLPFMIAGLTLIHLT. Heme b contacts are provided by His84 and His98. Positions 183 and 197 each coordinate heme b. His202 contacts a ubiquinone. Helical transmembrane passes span 227–247, 289–309, 321–341, and 348–368; these read LKDILGLALLLLPLTTMALFS, LGGVLALAASVLVLFLSPLLH, LSQLLFWALVANLLILTWIGS, and FIIIGQLASTTYFIILLILFP.

This sequence belongs to the cytochrome b family. The cytochrome bc1 complex contains 11 subunits: 3 respiratory subunits (MT-CYB, CYC1 and UQCRFS1), 2 core proteins (UQCRC1 and UQCRC2) and 6 low-molecular weight proteins (UQCRH/QCR6, UQCRB/QCR7, UQCRQ/QCR8, UQCR10/QCR9, UQCR11/QCR10 and a cleavage product of UQCRFS1). This cytochrome bc1 complex then forms a dimer. Heme b serves as cofactor.

It localises to the mitochondrion inner membrane. Functionally, component of the ubiquinol-cytochrome c reductase complex (complex III or cytochrome b-c1 complex) that is part of the mitochondrial respiratory chain. The b-c1 complex mediates electron transfer from ubiquinol to cytochrome c. Contributes to the generation of a proton gradient across the mitochondrial membrane that is then used for ATP synthesis. This chain is Cytochrome b (MT-CYB), found in Oceanodroma microsoma (Least storm petrel).